The primary structure comprises 405 residues: Acetate kinase (405 aa).

A Mg(2+)-binding site is contributed by Asn-7. An ATP-binding site is contributed by Lys-14. Residue Arg-92 participates in substrate binding. The active-site Proton donor/acceptor is the Asp-149. ATP contacts are provided by residues 209 to 213 (HLGNG) and 284 to 286 (DMR). Glu-389 lines the Mg(2+) pocket.

It belongs to the acetokinase family. In terms of assembly, homodimer. The cofactor is Mg(2+). Mn(2+) is required as a cofactor.

It is found in the cytoplasm. It catalyses the reaction acetate + ATP = acetyl phosphate + ADP. Its pathway is metabolic intermediate biosynthesis; acetyl-CoA biosynthesis; acetyl-CoA from acetate: step 1/2. In terms of biological role, catalyzes the formation of acetyl phosphate from acetate and ATP. Can also catalyze the reverse reaction. This chain is Acetate kinase, found in Borrelia garinii subsp. bavariensis (strain ATCC BAA-2496 / DSM 23469 / PBi) (Borreliella bavariensis).